Here is a 169-residue protein sequence, read N- to C-terminus: Lipoprotein signal peptidase (169 aa).

Helical transmembrane passes span 10–30 (LPWLWITVLVFVLDQVSKAFF), 41–61 (VVIPDLFSWTLAYNTGAAFSF), 68–88 (WQRWLFALIAIVVSAILVVWL), and 94–114 (GETWLAVALALVLGGALGNLY). Catalysis depends on residues aspartate 124 and aspartate 143. The chain crosses the membrane as a helical span at residues 135–155 (YFPAFNLADSAITVGAVMLAL).

It belongs to the peptidase A8 family.

The protein resides in the cell inner membrane. The enzyme catalyses Release of signal peptides from bacterial membrane prolipoproteins. Hydrolyzes -Xaa-Yaa-Zaa-|-(S,diacylglyceryl)Cys-, in which Xaa is hydrophobic (preferably Leu), and Yaa (Ala or Ser) and Zaa (Gly or Ala) have small, neutral side chains.. It participates in protein modification; lipoprotein biosynthesis (signal peptide cleavage). This protein specifically catalyzes the removal of signal peptides from prolipoproteins. This chain is Lipoprotein signal peptidase, found in Pseudomonas paraeruginosa (strain DSM 24068 / PA7) (Pseudomonas aeruginosa (strain PA7)).